The following is a 106-amino-acid chain: L-rhamnose mutarotase (106 aa).

Tyrosine 20 contributes to the substrate binding site. Residue histidine 24 is the Proton donor of the active site. Substrate contacts are provided by residues tyrosine 43 and 78-79 (WW).

The protein belongs to the rhamnose mutarotase family. As to quaternary structure, homodimer.

It localises to the cytoplasm. It catalyses the reaction alpha-L-rhamnose = beta-L-rhamnose. Its pathway is carbohydrate metabolism; L-rhamnose metabolism. Functionally, involved in the anomeric conversion of L-rhamnose. This is L-rhamnose mutarotase from Rhizobium johnstonii (strain DSM 114642 / LMG 32736 / 3841) (Rhizobium leguminosarum bv. viciae).